A 159-amino-acid polypeptide reads, in one-letter code: Small ribosomal subunit protein uS7 (159 aa).

This sequence belongs to the universal ribosomal protein uS7 family. In terms of assembly, part of the 30S ribosomal subunit. Contacts proteins S9 and S11.

Its function is as follows. One of the primary rRNA binding proteins, it binds directly to 16S rRNA where it nucleates assembly of the head domain of the 30S subunit. Is located at the subunit interface close to the decoding center, probably blocks exit of the E-site tRNA. The sequence is that of Small ribosomal subunit protein uS7 from Wolbachia sp. subsp. Brugia malayi (strain TRS).